Consider the following 572-residue polypeptide: Sorting nexin 2B (572 aa).

Disordered regions lie at residues 1 to 97 (MMGS…SSYL) and 114 to 136 (SEIN…SPSS). Positions 9-30 (ESHLHSSKEEMEKLFLREDGDP) are enriched in basic and acidic residues. Residues 32-53 (TKSNVNGDKSNSNYRSAMSTLF) show a composition bias toward polar residues. The segment covering 124–136 (SQSSDSLSRSPSS) has biased composition (low complexity). Ser-133 is subject to Phosphoserine. The 120-residue stretch at 147–266 (SNPQKEQEAT…KVFLQAQGKL (120 aa)) folds into the PX domain. Arg-190, Lys-216, and Arg-233 together coordinate a 1,2-diacyl-sn-glycero-3-phospho-(1D-myo-inositol-3-phosphate). One can recognise a BAR domain in the interval 318-572 (LRQSVSNDWG…ETRQYDRESS (255 aa)).

It belongs to the sorting nexin family. In terms of assembly, homodimer. Heterodimer with SNX1 or SNX2B. Component of the retromer complex which consists of VPS29 (MAG1), VPS26 (VPS26A or VPS26B), VPS35 (VPS35A or VPS35B or VPS35C), VPS5/17 (SNX1 or SNX2A or SNX2B). In terms of tissue distribution, ubiquitously expressed.

It localises to the cytoplasm. Its subcellular location is the endosome membrane. The protein localises to the prevacuolar compartment membrane. It is found in the golgi apparatus. The protein resides in the trans-Golgi network membrane. Plays a role in vesicular protein sorting. Acts at the crossroads between the secretory and endocytic pathways. Is involved in the endosome to vacuole protein transport and, as component of the membrane-associated retromer complex, is also involved in endosome-to-Golgi retrograde transport. In Arabidopsis thaliana (Mouse-ear cress), this protein is Sorting nexin 2B (SNX2B).